Here is a 787-residue protein sequence, read N- to C-terminus: Dolichyl-diphosphooligosaccharide--protein glycosyltransferase subunit STT3A (787 aa).

Residues 1–18 are Cytoplasmic-facing; sequence MAEPESSTAAAGGSRLRN. Residues 19 to 39 traverse the membrane as a helical segment; that stretch reads ACGGVLCAFTLLLIGVLAFSI. Topologically, residues 40–125 are lumenal; it reads RLFSVIKYES…LSVETVCVFT (86 aa). The DXD motif 1 motif lies at 53-55; it reads EFD. Mn(2+) is bound at residue Asp-55. A helical membrane pass occupies residues 126–144; it reads APIFSANASWATYLLTKEA. The Cytoplasmic segment spans residues 145–146; that stretch reads KG. The chain crosses the membrane as a helical span at residues 147-164; sequence TGAGLMAAAILAMVPSYI. Topologically, residues 165–175 are lumenal; it reads SRSVAGSYDNE. Asp-173 and Glu-175 together coordinate Mn(2+). The short motif at 173–175 is the DXD motif 2 element; the sequence is DNE. A helical membrane pass occupies residues 176–195; the sequence is AVAIFALIFTFYLYVKTLNT. The Cytoplasmic portion of the chain corresponds to 196-197; sequence GS. A helical transmembrane segment spans residues 198–212; sequence LFYATLNALSYFYMV. Topologically, residues 213-217 are lumenal; the sequence is CSWGG. The helical transmembrane segment at 218–234 threads the bilayer; it reads YTFIINLIPIHVLLCIV. The Cytoplasmic portion of the chain corresponds to 235 to 239; sequence TGRYS. A helical transmembrane segment spans residues 240 to 265; it reads SRLYIAYAPLVILGTLLAALVPVVGF. Topologically, residues 266-273 are lumenal; the sequence is NAVMTSEH. The chain crosses the membrane as a helical span at residues 274–293; the sequence is FASFLVFIILHVVALVYYIK. At 294 to 306 the chain is on the cytoplasmic side; that stretch reads GLLTPRLFKVAMT. The chain crosses the membrane as a helical span at residues 307–327; it reads LVITVGLAVCFAVIAILIALV. Residues 328 to 365 lie on the Lumenal side of the membrane; sequence ASSPTKGWSGRSLSLLDPTYASKYIPIIASVSEHQPPT. The SVSE motif signature appears at 357 to 360; that stretch reads SVSE. The helical transmembrane segment at 366–388 threads the bilayer; that stretch reads WPSYFMDINVLAFLIPAGIISCF. At 389–394 the chain is on the cytoplasmic side; that stretch reads LPLSDA. A helical transmembrane segment spans residues 395–411; the sequence is SSFVVLYLVTAVYFSGV. Over 412 to 415 the chain is Lumenal; that stretch reads MVRL. Position 414 (Arg-414) interacts with dolichyl diphosphooligosaccharide. Residues 416-437 form a helical membrane-spanning segment; the sequence is MLVLAPAACILSGIALSEAFDV. The Cytoplasmic segment spans residues 438–525; it reads LTRSVKYQLS…KLLVLPMEAS (88 aa). Residues 453–475 are compositionally biased toward low complexity; it reads SPAASGDSSAESSSASTVSTNSA. The tract at residues 453 to 507 is disordered; it reads SPAASGDSSAESSSASTVSTNSAKNETRPEKTETAPKEKPSKKNRKKEKEVAESV. Basic and acidic residues predominate over residues 477–504; it reads NETRPEKTETAPKEKPSKKNRKKEKEVA. Residues 526–546 form a helical membrane-spanning segment; it reads VLGILLLIVLGGFYVVHCVWA. Residues 547–787 lie on the Lumenal side of the membrane; the sequence is AAEAYSAPSI…AAGRKKNPWQ (241 aa). The interacts with target acceptor peptide in protein substrate stretch occupies residues 592-594; it reads WWD. The short motif at 592-596 is the WWDYG motif element; that stretch reads WWDYG. Tyr-597 lines the dolichyl diphosphooligosaccharide pocket. N-linked (GlcNAc...) asparagine glycans are attached at residues Asn-604 and Asn-611. Asn-615 is a glycosylation site (N-linked (GlcNAc...) (high mannose) asparagine). The short motif at 659-666 is the DK motif element; the sequence is DINKFLWM. Positions 759-769 are enriched in basic residues; sequence RVRGKLKKLKS. Residues 759–787 form a disordered region; it reads RVRGKLKKLKSGSKASSTNAAGRKKNPWQ.

The protein belongs to the STT3 family. In terms of assembly, component of the oligosaccharyltransferase (OST) complex. Mg(2+) serves as cofactor. The cofactor is Mn(2+).

It is found in the endoplasmic reticulum membrane. The catalysed reaction is a di-trans,poly-cis-dolichyl diphosphooligosaccharide + L-asparaginyl-[protein] = N(4)-(oligosaccharide-(1-&gt;4)-N-acetyl-beta-D-glucosaminyl-(1-&gt;4)-N-acetyl-beta-D-glucosaminyl)-L-asparaginyl-[protein] + a di-trans,poly-cis-dolichyl diphosphate + H(+). The protein operates within protein modification; protein glycosylation. In terms of biological role, catalytic subunit of the oligosaccharyl transferase (OST) complex that catalyzes the initial transfer of a defined glycan (Glc(3)Man(9)GlcNAc(2) in eukaryotes) from the lipid carrier dolichol-pyrophosphate to an asparagine residue within an Asn-X-Ser/Thr consensus motif in nascent polypeptide chains, the first step in protein N-glycosylation. N-glycosylation occurs cotranslationally and the complex associates with the Sec61 complex at the channel-forming translocon complex that mediates protein translocation across the endoplasmic reticulum (ER). All subunits are required for a maximal enzyme activity. This subunit contains the active site and the acceptor peptide and donor lipid-linked oligosaccharide (LLO) binding pockets. The sequence is that of Dolichyl-diphosphooligosaccharide--protein glycosyltransferase subunit STT3A (STT3A) from Oryza sativa subsp. japonica (Rice).